We begin with the raw amino-acid sequence, 197 residues long: LexA repressor (197 aa).

The segment at residues 28–47 (VREIARRFRITPRGAQLHLV) is a DNA-binding region (H-T-H motif). Catalysis depends on for autocatalytic cleavage activity residues Ser-119 and Lys-156.

Belongs to the peptidase S24 family. Homodimer.

It carries out the reaction Hydrolysis of Ala-|-Gly bond in repressor LexA.. Represses a number of genes involved in the response to DNA damage (SOS response), including recA and lexA. In the presence of single-stranded DNA, RecA interacts with LexA causing an autocatalytic cleavage which disrupts the DNA-binding part of LexA, leading to derepression of the SOS regulon and eventually DNA repair. The sequence is that of LexA repressor from Thermotoga neapolitana.